Consider the following 308-residue polypeptide: Reaction center protein M chain (308 aa).

The next 3 membrane-spanning stretches (helical) occupy residues 54–80 (GSLGVLSLFSGLMWFFTIGIWFWYQAG), 111–140 (KEGGLWLIASFFMFVAVWSWWGRTYLRAQA), and 143–168 (MGKHTAWAFLSAIWLWMVLGFIRPIL). Positions 183 and 203 each coordinate (7R,8Z)-bacteriochlorophyll b. Residues 198-226 (FYNPFHGLSIAFLYGSALLFAMHGATILA) form a helical membrane-spanning segment. Fe cation contacts are provided by His220 and Glu235. Trp253 contributes to the a ubiquinone binding site. The helical transmembrane segment at 260–286 (NATMEGIHRWAIWMAVLVTLTGGIGIL) threads the bilayer. His267 lines the Fe cation pocket.

The protein belongs to the reaction center PufL/M/PsbA/D family. As to quaternary structure, reaction center is composed of four bacteriochlorophylls, two bacteriopheophytins, two ubiquinones, one iron, and three highly hydrophobic polypeptide chains (designated L, M, and H).

The protein resides in the cellular chromatophore membrane. Its function is as follows. The reaction center is a membrane-bound complex that mediates the initial photochemical event in the electron transfer process of photosynthesis. The protein is Reaction center protein M chain (pufM) of Cereibacter sphaeroides (strain ATCC 17023 / DSM 158 / JCM 6121 / CCUG 31486 / LMG 2827 / NBRC 12203 / NCIMB 8253 / ATH 2.4.1.) (Rhodobacter sphaeroides).